The following is a 98-amino-acid chain: Putative septation protein SpoVG (98 aa).

The protein belongs to the SpoVG family.

In terms of biological role, essential for sporulation. Interferes with or is a negative regulator of the pathway leading to asymmetric septation. This chain is Putative septation protein SpoVG, found in Bacillus pumilus (strain SAFR-032).